The primary structure comprises 914 residues: Protein GAMETE EXPRESSED 2 (914 aa).

2 Filamin repeats span residues 249–382 and 391–485; these read IGYC…IKEV and ACSV…DVNV. Residues 893-913 form a helical membrane-spanning segment; the sequence is LVVVPFSFFSIKLFSLLMVLI.

In tricellular pollen, expressed in mature sperm cells but not in the vegetative cell. In bicellular pollen, detected in the progenitor generative cell. Detected in the egg cell within the female gametophyte.

It localises to the cell membrane. This chain is Protein GAMETE EXPRESSED 2 (GEX2), found in Arabidopsis thaliana (Mouse-ear cress).